Reading from the N-terminus, the 94-residue chain is Large ribosomal subunit protein uL23 (94 aa).

The protein belongs to the universal ribosomal protein uL23 family. As to quaternary structure, part of the 50S ribosomal subunit. Contacts protein L29, and trigger factor when it is bound to the ribosome.

Functionally, one of the early assembly proteins it binds 23S rRNA. One of the proteins that surrounds the polypeptide exit tunnel on the outside of the ribosome. Forms the main docking site for trigger factor binding to the ribosome. This Treponema denticola (strain ATCC 35405 / DSM 14222 / CIP 103919 / JCM 8153 / KCTC 15104) protein is Large ribosomal subunit protein uL23.